A 371-amino-acid chain; its full sequence is Cytochrome b (371 aa).

Helical transmembrane passes span 25–45 (FGSM…FLAV), 69–90 (WMMQ…YIHI), 105–125 (WLSG…XXXX), and 170–190 (XXXX…LHIM). Heme b is bound by residues H75 and H89. Residues X174 and H188 each coordinate heme b. H193 contacts a ubiquinone. The next 4 membrane-spanning stretches (helical) occupy residues 218 to 238 (YKDL…VSFL), 280 to 300 (LGGA…PFTH), 312 to 332 (IMQL…WAAT), and 339 to 358 (FTMI…ITNP).

It belongs to the cytochrome b family. As to quaternary structure, the cytochrome bc1 complex contains 3 respiratory subunits (MT-CYB, CYC1 and UQCRFS1), 2 core proteins (UQCRC1 and UQCRC2) and probably 6 low-molecular weight proteins. Requires heme b as cofactor.

It is found in the mitochondrion inner membrane. Its function is as follows. Component of the ubiquinol-cytochrome c reductase complex (complex III or cytochrome b-c1 complex) that is part of the mitochondrial respiratory chain. The b-c1 complex mediates electron transfer from ubiquinol to cytochrome c. Contributes to the generation of a proton gradient across the mitochondrial membrane that is then used for ATP synthesis. The polypeptide is Cytochrome b (MT-CYB) (Eryx jaculus (Javelin sand boa)).